A 187-amino-acid chain; its full sequence is Calmodulin-like protein 1 (187 aa).

The residue at position 2 (Ala2) is an N-acetylalanine. 4 EF-hand domains span residues Glu8–Asn43, Pro44–Asp79, Asp81–Arg116, and Leu117–Arg152. Ca(2+) is bound by residues Asp21, Asp23, Asp25, Ser27, Glu32, Asp57, Asp59, Asn61, Asn63, Glu68, Asp94, Asp96, Asn98, Glu105, Asp130, Asp132, Asp134, Gln136, and Glu141. Residues Lys153–Leu187 are disordered. Residues Arg154–Ser165 show a composition bias toward basic and acidic residues. A compositionally biased stretch (low complexity) spans Ser169–Ser178. Cysteine methyl ester is present on Cys184. Residue Cys184 is the site of S-farnesyl cysteine attachment. The propeptide at Val185–Leu187 is removed in mature form.

This sequence belongs to the calmodulin family.

Its subcellular location is the membrane. Functionally, calcium-binding protein that binds and activates CAMK1, a calcium/calmodulin-dependent kinase. The chain is Calmodulin-like protein 1 (CML1) from Oryza sativa subsp. japonica (Rice).